The following is a 300-amino-acid chain: U6 snRNA methylphosphate capping enzyme Amus (300 aa).

Positions 1 to 12 (MDLENNNNTPLT) are enriched in polar residues. Disordered stretches follow at residues 1–21 (MDLE…KCAK) and 34–68 (VESK…GKPM). The segment covering 34–44 (VESKRLKKEES) has biased composition (basic and acidic residues). Positions 95 to 300 (DIRLDVLGTQ…KRPIQIFTKS (206 aa)) constitute a Bin3-type SAM domain. S-adenosyl-L-methionine is bound by residues asparagine 119 and aspartate 140.

The protein belongs to the methyltransferase superfamily.

Its subcellular location is the nucleus. Its function is as follows. Probable S-adenosyl-L-methionine-dependent methyltransferase that binds and stabilizes U6 snRNA, probably by adding a methylphosphate cap at its 5'-end. Required for U6 stability, but not stability of 7SK snRNAs, other miRNAs or tRNAs. U6 stabilization is required for efficient pre-mRNA splicing. Essential for organismal and germline development. The protein is U6 snRNA methylphosphate capping enzyme Amus of Drosophila melanogaster (Fruit fly).